Here is a 107-residue protein sequence, read N- to C-terminus: Sperm-specific class P protein 34 (107 aa).

The segment at 1-26 is disordered; that stretch reads MINVDPPTGNYPATGGNSTHNITSES. In terms of domain architecture, MSP spans 1 to 107; that stretch reads MINVDPPTGN…GEIIVKLIAA (107 aa). Polar residues predominate over residues 15–25; the sequence is GGNSTHNITSE.

In terms of tissue distribution, expressed at higher level in testis.

This Caenorhabditis elegans protein is Sperm-specific class P protein 34 (ssp-34).